A 345-amino-acid chain; its full sequence is Dihydroorotate dehydrogenase (quinone) (345 aa).

Residues 65-69 (AGLDK) and threonine 89 contribute to the FMN site. Position 69 (lysine 69) interacts with substrate. Residue 114 to 118 (NRMGF) participates in substrate binding. The FMN site is built by asparagine 142 and asparagine 175. Residue asparagine 175 coordinates substrate. Serine 178 serves as the catalytic Nucleophile. Asparagine 180 lines the substrate pocket. The FMN site is built by lysine 220 and threonine 248. 249–250 (NT) serves as a coordination point for substrate. Residues glycine 271, glycine 300, and 321 to 322 (YT) contribute to the FMN site.

The protein belongs to the dihydroorotate dehydrogenase family. Type 2 subfamily. In terms of assembly, monomer. Requires FMN as cofactor.

It localises to the cell membrane. It carries out the reaction (S)-dihydroorotate + a quinone = orotate + a quinol. It functions in the pathway pyrimidine metabolism; UMP biosynthesis via de novo pathway; orotate from (S)-dihydroorotate (quinone route): step 1/1. Functionally, catalyzes the conversion of dihydroorotate to orotate with quinone as electron acceptor. The chain is Dihydroorotate dehydrogenase (quinone) from Burkholderia cenocepacia (strain ATCC BAA-245 / DSM 16553 / LMG 16656 / NCTC 13227 / J2315 / CF5610) (Burkholderia cepacia (strain J2315)).